The sequence spans 366 residues: Sperm equatorial segment protein 1 (366 aa).

The first 18 residues, 1–18 (MKFLVLLVALLLWPSSLP), serve as a signal peptide directing secretion. N129 carries N-linked (GlcNAc...) asparagine glycosylation. The disordered stretch occupies residues 139–204 (PFIEKDEPEP…EDVPQLSGDN (66 aa)). Residues 144–157 (DEPEPEPEPEPEPE) are compositionally biased toward acidic residues. Polar residues predominate over residues 165–189 (APTQVPSVTEPSQDVTSLSGSTDLG).

This sequence belongs to the SPESP1 family. In terms of processing, glycosylated. In testis there are two predominant forms of 77- and 67-kDa and a form of 47-kDa, whereas in epididymal sperm from caput, corpus, and cauda there are two forms of 47- and 43-kDa. Testis forms contain complex carbohydrate residues. Epididymal sperm forms are N-glycosylated. Then undergoes significant glycosylation in the testis and that the majority of these glycoconjugates are removed by the time sperm reach the caput epididymis.

Its subcellular location is the cytoplasmic vesicle. It is found in the secretory vesicle. It localises to the acrosome. Involved in fertilization ability of sperm. The polypeptide is Sperm equatorial segment protein 1 (Bos taurus (Bovine)).